Consider the following 163-residue polypeptide: 3-hydroxyacyl-[acyl-carrier-protein] dehydratase FabZ (163 aa).

His-64 is a catalytic residue.

Belongs to the thioester dehydratase family. FabZ subfamily.

Its subcellular location is the cytoplasm. The catalysed reaction is a (3R)-hydroxyacyl-[ACP] = a (2E)-enoyl-[ACP] + H2O. In terms of biological role, involved in unsaturated fatty acids biosynthesis. Catalyzes the dehydration of short chain beta-hydroxyacyl-ACPs and long chain saturated and unsaturated beta-hydroxyacyl-ACPs. This chain is 3-hydroxyacyl-[acyl-carrier-protein] dehydratase FabZ, found in Caulobacter sp. (strain K31).